Here is a 155-residue protein sequence, read N- to C-terminus: Nuclear cap-binding protein subunit 2 (155 aa).

MRNA contacts are provided by residues tyrosine 19, tyrosine 42, 111 to 115 (RTDWD), 122 to 126 (RQYGR), and 132 to 133 (QV). Residues 39-117 (NTLYVGNLSF…RIIRTDWDAG (79 aa)) enclose the RRM domain. Residues 122–155 (RQYGRGKSGGQVRDEYRQDYDPARGGYGKVVARP) form a disordered region. Residues 133–143 (VRDEYRQDYDP) show a composition bias toward basic and acidic residues.

It belongs to the RRM NCBP2 family. As to quaternary structure, component of the nuclear cap-binding complex (CBC), a heterodimer composed of ncbp1/cbp80 and ncbp2/cbp20 that interacts with m7GpppG-capped RNA.

The protein resides in the nucleus. The protein localises to the cytoplasm. In terms of biological role, component of the cap-binding complex (CBC), which binds co-transcriptionally to the 5' cap of pre-mRNAs and is involved in various processes such as pre-mRNA splicing, translation regulation, nonsense-mediated mRNA decay, RNA-mediated gene silencing (RNAi) by microRNAs (miRNAs) and mRNA export. The CBC complex is involved in mRNA export from the nucleus, leading to the recruitment of the mRNA export machinery to the 5' end of mRNA and to mRNA export in a 5' to 3' direction through the nuclear pore. The CBC complex is also involved in mediating U snRNA and intronless mRNAs export from the nucleus. The CBC complex is essential for a pioneer round of mRNA translation, before steady state translation when the CBC complex is replaced by cytoplasmic cap-binding protein eIF4E. The pioneer round of mRNA translation mediated by the CBC complex plays a central role in nonsense-mediated mRNA decay (NMD), NMD only taking place in mRNAs bound to the CBC complex, but not on eIF4E-bound mRNAs. The CBC complex enhances NMD in mRNAs containing at least one exon-junction complex (EJC), promoting the interaction between upf1 and upf2. The CBC complex is also involved in 'failsafe' NMD, which is independent of the EJC complex, while it does not participate in Staufen-mediated mRNA decay (SMD). During cell proliferation, the CBC complex is also involved in microRNAs (miRNAs) biogenesis via its interaction with srrt/ars2, thereby being required for miRNA-mediated RNA interference. The CBC complex also acts as a negative regulator of parn, thereby acting as an inhibitor of mRNA deadenylation. In the CBC complex, ncbp2/cbp20 recognizes and binds capped RNAs (m7GpppG-capped RNA) but requires ncbp1/cbp80 to stabilize the movement of its N-terminal loop and lock the CBC into a high affinity cap-binding state with the cap structure. The conventional cap-binding complex with NCBP2 binds both small nuclear RNA (snRNA) and messenger (mRNA) and is involved in their export from the nucleus. This Esox lucius (Northern pike) protein is Nuclear cap-binding protein subunit 2 (ncbp2).